The chain runs to 824 residues: ABC transporter B family member 7 (824 aa).

Residues 41-101 form a disordered region; that stretch reads RNSVKFNLDT…NKNNKNKINN (61 aa). The segment covering 63 to 101 has biased composition (low complexity); sequence NNNKNNNNNNNNNNNNNNNNNNNNNNNNNNKNNKNKINN. 6 helical membrane-spanning segments follow: residues 164–184, 252–272, 325–345, 347–367, 431–451, and 461–481; these read IWYFVFAFLALSITTLCQLAL, WIIIIVLVQTPFLFARYLLFT, LSTLVRCSLQLIGGLLILVFL, WKVTLLMISFLVILLISFLVF, AFWISFGSLLVMGTIIGIYGF, and ILLLQFILYSLMITASMNGLI. The region spanning 167 to 489 is the ABC transmembrane type-1 domain; sequence FVFAFLALSI…LIGSINEIQK (323 aa). The ABC transporter domain maps to 521-767; it reads ISFDNVYFNN…STSFYVTSVL (247 aa). ATP is bound at residue 570–576; the sequence is GPSQSKE. Positions 772-813 are disordered; that stretch reads NKYNNNNNNNNNNNNNNNNNNNNNNNNNNNNNNNNNNNNINN.

It belongs to the ABC transporter superfamily. ABCB family.

The protein resides in the membrane. The protein is ABC transporter B family member 7 (abcB7) of Dictyostelium discoideum (Social amoeba).